A 65-amino-acid chain; its full sequence is Large ribosomal subunit protein bL35 (65 aa).

Belongs to the bacterial ribosomal protein bL35 family.

This is Large ribosomal subunit protein bL35 from Nostoc sp. (strain PCC 7120 / SAG 25.82 / UTEX 2576).